Consider the following 252-residue polypeptide: Imidazole glycerol phosphate synthase subunit HisF (252 aa).

Residues Asp-11 and Asp-130 contribute to the active site.

Belongs to the HisA/HisF family. In terms of assembly, heterodimer of HisH and HisF.

Its subcellular location is the cytoplasm. It catalyses the reaction 5-[(5-phospho-1-deoxy-D-ribulos-1-ylimino)methylamino]-1-(5-phospho-beta-D-ribosyl)imidazole-4-carboxamide + L-glutamine = D-erythro-1-(imidazol-4-yl)glycerol 3-phosphate + 5-amino-1-(5-phospho-beta-D-ribosyl)imidazole-4-carboxamide + L-glutamate + H(+). Its pathway is amino-acid biosynthesis; L-histidine biosynthesis; L-histidine from 5-phospho-alpha-D-ribose 1-diphosphate: step 5/9. Functionally, IGPS catalyzes the conversion of PRFAR and glutamine to IGP, AICAR and glutamate. The HisF subunit catalyzes the cyclization activity that produces IGP and AICAR from PRFAR using the ammonia provided by the HisH subunit. The chain is Imidazole glycerol phosphate synthase subunit HisF from Acinetobacter baumannii (strain AB307-0294).